A 292-amino-acid chain; its full sequence is Techylectin-5A (292 aa).

Residues 1-23 (MHNLRNILFVITLIGQKYGLTSS) form the signal peptide. Position 24 is a pyrrolidone carboxylic acid (Q24). A Fibrinogen C-terminal domain is found at 63–286 (PIVSPDPTDC…QVEMKIRPVE (224 aa)). Residues C72 and C103 are joined by a disulfide bond. N-linked (GlcNAc...) asparagine glycosylation is found at N173, N198, and N214. Residues D221, H225, and T227 each contribute to the Ca(2+) site. C229 and C242 are disulfide-bonded.

As to quaternary structure, multimeric. PubMed:10468566 and PubMed:11707569 are in disagreement about the nature of the multimer, PubMed:10468566 finds hexamers and octamers, the results in PubMed:11707569 suggest tetramers. As to expression, strongly expressed in heart and intestine, weakly expressed in hepatopancreas. Not found in hemocytes, stomach, nervous tissue or skeletal muscle.

It localises to the secreted. Its function is as follows. Lectin involved in innate immunity. Agglutinates all types of human erythrocytes, Gram-positive and Gram-negative bacteria. Has a stronger agglutinating activity towards Gram-negative bacteria than towards Gram-positive bacteria. Specifically recognizes acetyl group-containing substances on agglutinated cells. The hemagglutinating activity was inhibited by EDTA, acetyl group-containing mono- and disaccharides, N-acetyl derivatives of amino acids, other acetyl group-containing substances, propionamide and benzamide. Enhances the antimicrobial activity of big defensin against Gram-positive bacteria but not against Gram-negative bacteria. This is Techylectin-5A from Tachypleus tridentatus (Japanese horseshoe crab).